The chain runs to 348 residues: Chitinase (348 aa).

An N-terminal signal peptide occupies residues 1-29; the sequence is MKLKKIIPAFPLLSTVAVGLWLTPTQASA. The 307-residue stretch at 42–348 folds into the GH18 domain; that stretch reads KVLVGYWHNW…FATRYSNLVK (307 aa). E161 serves as the catalytic Proton donor.

This sequence belongs to the glycosyl hydrolase 18 family.

Its subcellular location is the secreted. The catalysed reaction is Random endo-hydrolysis of N-acetyl-beta-D-glucosaminide (1-&gt;4)-beta-linkages in chitin and chitodextrins.. The protein operates within glycan degradation; chitin degradation. Its function is as follows. Involved in chitin degradation. Catalyzes the cleavage of glycosidic linkages in chitooligosaccharides and in alpha- and beta-chitin. Its activity on chitooligosaccharides increases considerably with degrees of polymerization (the initial rate of hydrolysis for GlcNAc5 is about 130-fold higher than that for GlcNAc3). Its activity is greatly stimulated in the presence of the lytic chitin monooxygenase EfCBM33A, which attacks the crystalline structure of chitin and makes the polymer more accessible to the chitinase; combining the two enzymes leads to rapid and complete depolymerization of crystalline chitin, especially with beta-chitin as a substrate. Is likely involved in a chitin degradation pathway that allows E.faecalis V583 to grow on chitin as a carbon source. This is Chitinase from Enterococcus faecalis (strain ATCC 700802 / V583).